We begin with the raw amino-acid sequence, 176 residues long: Large ribosomal subunit protein uL10 (176 aa).

It belongs to the universal ribosomal protein uL10 family. In terms of assembly, part of the ribosomal stalk of the 50S ribosomal subunit. The N-terminus interacts with L11 and the large rRNA to form the base of the stalk. The C-terminus forms an elongated spine to which L12 dimers bind in a sequential fashion forming a multimeric L10(L12)X complex.

Forms part of the ribosomal stalk, playing a central role in the interaction of the ribosome with GTP-bound translation factors. The polypeptide is Large ribosomal subunit protein uL10 (Teredinibacter turnerae (strain ATCC 39867 / T7901)).